The sequence spans 132 residues: Small ribosomal subunit protein uS8 (132 aa).

The protein belongs to the universal ribosomal protein uS8 family. As to quaternary structure, part of the 30S ribosomal subunit. Contacts proteins S5 and S12.

In terms of biological role, one of the primary rRNA binding proteins, it binds directly to 16S rRNA central domain where it helps coordinate assembly of the platform of the 30S subunit. This Psychrobacter arcticus (strain DSM 17307 / VKM B-2377 / 273-4) protein is Small ribosomal subunit protein uS8.